Here is a 316-residue protein sequence, read N- to C-terminus: Ribosomal RNA small subunit methyltransferase H (316 aa).

S-adenosyl-L-methionine contacts are provided by residues 35 to 37 (AGH), aspartate 55, phenylalanine 84, aspartate 105, and glutamine 112.

The protein belongs to the methyltransferase superfamily. RsmH family.

It localises to the cytoplasm. It catalyses the reaction cytidine(1402) in 16S rRNA + S-adenosyl-L-methionine = N(4)-methylcytidine(1402) in 16S rRNA + S-adenosyl-L-homocysteine + H(+). In terms of biological role, specifically methylates the N4 position of cytidine in position 1402 (C1402) of 16S rRNA. The sequence is that of Ribosomal RNA small subunit methyltransferase H from Streptococcus mutans serotype c (strain ATCC 700610 / UA159).